We begin with the raw amino-acid sequence, 502 residues long: ATP synthase subunit alpha, chloroplastic (502 aa).

Residue 170 to 177 (GDRQTGKT) coordinates ATP.

It belongs to the ATPase alpha/beta chains family. As to quaternary structure, F-type ATPases have 2 components, CF(1) - the catalytic core - and CF(0) - the membrane proton channel. CF(1) has five subunits: alpha(3), beta(3), gamma(1), delta(1), epsilon(1). CF(0) has four main subunits: a, b, b' and c.

The protein resides in the plastid. It is found in the chloroplast thylakoid membrane. It carries out the reaction ATP + H2O + 4 H(+)(in) = ADP + phosphate + 5 H(+)(out). Functionally, produces ATP from ADP in the presence of a proton gradient across the membrane. The alpha chain is a regulatory subunit. In Tupiella akineta (Green alga), this protein is ATP synthase subunit alpha, chloroplastic.